Consider the following 1865-residue polypeptide: Transcription initiation factor TFIID subunit 1 (1865 aa).

Residues 1-27 form a disordered region; that stretch reads MLLPATGASRSAAIMSDTDSDEDSSGG. The Protein kinase 1 domain occupies 1 to 409; sequence MLLPATGASR…VTQLHWEDDI (409 aa). Position 131 is a phosphoserine; by autocatalysis (serine 131). Residues 144 to 199 form a disordered region; sequence EDIDCKLMPPPPPPPGPVKKEKDQDGLTGEKVDFSSSSDSESEMGPQEAAQAESKD. Over residues 151–160 the composition is skewed to pro residues; that stretch reads MPPPPPPPGP. The segment covering 161-176 has biased composition (basic and acidic residues); that stretch reads VKKEKDQDGLTGEKVD. Position 302 is a phosphoserine; by autocatalysis (serine 302). Residues 509–530 form a disordered region; sequence PDEKEEATSNSPSKENKKESSL. A histone acetyltransferase (HAT) region spans residues 512–971; that stretch reads KEEATSNSPS…KIPNKPTQQK (460 aa). Lysine 539 carries the post-translational modification N6-acetyllysine. Residues lysine 544 and lysine 557 each participate in a glycyl lysine isopeptide (Lys-Gly) (interchain with G-Cter in SUMO2) cross-link. Disordered regions lie at residues 964–983 and 1228–1252; these read PNKP…KKTV and RLKR…MKER. Basic and acidic residues-rich tracts occupy residues 969-978 and 1228-1244; these read QQKDDKEPQP and RLKR…PPEK. The segment at residues 1190–1268 is a DNA-binding region (HMG box); it reads VRIRTTKDEE…CGACGAIGHM (79 aa). The segment at 1337–1624 is interaction with ASF1A and ASF1B; that stretch reads VLKFPKQQLP…TAKEAALEEA (288 aa). Positions 1346-1353 match the Nuclear localization signal motif; sequence PPKKKRRV. Bromo domains follow at residues 1371–1479 and 1493–1602; these read RRRT…LKEK and LLDD…LTEY. Residues 1420–1865 enclose the Protein kinase 2 domain; the sequence is MDLQTLRENV…AGDSDMDSDE (446 aa). A disordered region spans residues 1625-1865; that stretch reads ELESLDPMTP…AGDSDMDSDE (241 aa). A compositionally biased stretch (pro residues) spans 1633-1642; the sequence is TPGPYTPQPP. Polar residues predominate over residues 1646 to 1682; it reads DNSTSLSVSRDASVYQDESNMSVLDIPSATSEKQLTQ. Phosphoserine is present on residues serine 1664 and serine 1667. Composition is skewed to acidic residues over residues 1683-1697 and 1715-1730; these read EGED…EEEG and EGED…EEGD. Residues 1739-1751 are compositionally biased toward low complexity; sequence SESGSDSDVGSGS. 3 positions are modified to phosphoserine: serine 1773, serine 1776, and serine 1794. Residues 1804–1814 are compositionally biased toward polar residues; that stretch reads KSNTQDTSFSS. The segment covering 1820-1829 has biased composition (acidic residues); sequence VSEEEEDEEE. The residue at position 1821 (serine 1821) is a Phosphoserine. Residues 1832-1841 show a composition bias toward polar residues; that stretch reads SGPSVLSQVH.

Belongs to the TAF1 family. In terms of assembly, component of the TFIID basal transcription factor complex, composed of TATA-box-binding protein TBP, and a number of TBP-associated factors (TAFs), including TAF1, TAF2, TAF3, TAF4, TAF5, TAF6, TAF7, TAF8, TAF9, TAF10, TAF11, TAF12 and TAF13. Interacts with TAF7; the interaction is direct. TAF1, when part of the TFIID complex, interacts with C-terminus of TP53. Part of a TFIID-containing RNA polymerase II pre-initiation complex that is composed of TBP and at least GTF2A1, GTF2A2, GTF2E1, GTF2E2, GTF2F1, GTF2H2, GTF2H3, GTF2H4, GTF2H5, GTF2B, TCEA1, ERCC2, ERCC3, TAF1, TAF2, TAF3, TAF4, TAF5, TAF6, TAF7, TAF8, TAF9, TAF10, TAF11, TAF12 and TAF13. Component of some MLL1/MLL complex, at least composed of the core components KMT2A/MLL1, ASH2L, HCFC1/HCF1, WDR5 and RBBP5, as well as the facultative components BACC1, CHD8, E2F6, HSP70, INO80C, KANSL1, LAS1L, MAX, MCRS1, MGA, KAT8/MOF, PELP1, PHF20, PRP31, RING2, RUVB1/TIP49A, RUVB2/TIP49B, SENP3, TAF1, TAF4, TAF6, TAF7, TAF9 and TEX10. RB1 interacts with the N-terminal domain of TAF1. Interacts with ASF1A and ASF1B. Interacts (via bromo domains) with acetylated lysine residues on the N-terminus of histone H1.4, H2A, H2B, H3 and H4 (in vitro). Mg(2+) serves as cofactor. Phosphorylated by casein kinase II in vitro.

It is found in the nucleus. It catalyses the reaction L-seryl-[protein] + ATP = O-phospho-L-seryl-[protein] + ADP + H(+). The catalysed reaction is L-threonyl-[protein] + ATP = O-phospho-L-threonyl-[protein] + ADP + H(+). It carries out the reaction L-lysyl-[protein] + acetyl-CoA = N(6)-acetyl-L-lysyl-[protein] + CoA + H(+). Its activity is regulated as follows. Autophosphorylates on Ser residues. Inhibited by retinoblastoma tumor suppressor protein, RB1. Binding to TAF1 or CIITA inhibits the histone acetyltransferase activity. The TFIID basal transcription factor complex plays a major role in the initiation of RNA polymerase II (Pol II)-dependent transcription. TFIID recognizes and binds promoters with or without a TATA box via its subunit TBP, a TATA-box-binding protein, and promotes assembly of the pre-initiation complex (PIC). The TFIID complex consists of TBP and TBP-associated factors (TAFs), including TAF1, TAF2, TAF3, TAF4, TAF5, TAF6, TAF7, TAF8, TAF9, TAF10, TAF11, TAF12 and TAF13. TAF1 is the largest component and core scaffold of the TFIID complex, involved in nucleating complex assembly. TAF1 forms a promoter DNA binding subcomplex of TFIID, together with TAF7 and TAF2. Contains novel N- and C-terminal Ser/Thr kinase domains which can autophosphorylate or transphosphorylate other transcription factors. Phosphorylates TP53 on 'Thr-55' which leads to MDM2-mediated degradation of TP53. Phosphorylates GTF2A1 and GTF2F1 on Ser residues. Possesses DNA-binding activity. Essential for progression of the G1 phase of the cell cycle. The sequence is that of Transcription initiation factor TFIID subunit 1 from Mesocricetus auratus (Golden hamster).